The chain runs to 333 residues: DNA-directed RNA polymerase subunit alpha (333 aa).

The interval 1-233 is alpha N-terminal domain (alpha-NTD); the sequence is MVQEKLRFST…DLFIPFLHAE (233 aa). Residues 266–333 are alpha C-terminal domain (alpha-CTD); it reads KKEIALKSIF…DILKIQKYFT (68 aa).

This sequence belongs to the RNA polymerase alpha chain family. In terms of assembly, in plastids the minimal PEP RNA polymerase catalytic core is composed of four subunits: alpha, beta, beta', and beta''. When a (nuclear-encoded) sigma factor is associated with the core the holoenzyme is formed, which can initiate transcription.

It is found in the plastid. Its subcellular location is the chloroplast. It catalyses the reaction RNA(n) + a ribonucleoside 5'-triphosphate = RNA(n+1) + diphosphate. Functionally, DNA-dependent RNA polymerase catalyzes the transcription of DNA into RNA using the four ribonucleoside triphosphates as substrates. The protein is DNA-directed RNA polymerase subunit alpha of Phaseolus angularis (Azuki bean).